Consider the following 548-residue polypeptide: Isocitrate dehydrogenase [NAD(+)] 1, mitochondrial (548 aa).

Residues Met-1–Ala-53 constitute a mitochondrion transit peptide. Residues Thr-132–Thr-134 and Asn-153 contribute to the NAD(+) site. Residues Ser-151 to Arg-157, Arg-187, Tyr-194, Lys-266, Asp-311, and Asp-335 each bind D-threo-isocitrate. 3 residues coordinate Mg(2+): Asp-311, Asp-335, and Asp-339. NAD(+) contacts are provided by residues His-372 to Asp-377 and Asn-391. Positions Ile-499–Ala-534 constitute an EF-hand domain. Residues Asp-512, Asn-514, Asp-516, Phe-518, and Glu-523 each contribute to the Ca(2+) site.

The protein belongs to the isocitrate and isopropylmalate dehydrogenases family. As to quaternary structure, homodimer. Mg(2+) is required as a cofactor. Mn(2+) serves as cofactor.

It is found in the mitochondrion. It catalyses the reaction D-threo-isocitrate + NAD(+) = 2-oxoglutarate + CO2 + NADH. With respect to regulation, the homodimer exhibits allosteric regulation by isocitrate. Activated by Mn(2+) and Mg(2+). No activation by Na(+), K(+) or Li(+). Inhibited by Co(2+), Cu(2+) and Ni(2+), but not with Ca(2+) in the presence of Mn(2+) or Mg(2+). Competitively inhibited by NADH, but no effect on activity by 1.0 mM citrate. Strongly inhibited by excess ATP, ADP, AMP and alpha-ketoglutarate. Its function is as follows. Performs an essential role in the oxidative function of the tricarboxylic acid cycle and respiration. Catalyzes the decarboxylation of isocitrate to produce 2-oxoglutarate and generate NADH to provide electrons for energy production. No activity with NADP(+). This chain is Isocitrate dehydrogenase [NAD(+)] 1, mitochondrial, found in Phaeodactylum tricornutum (strain CCAP 1055/1).